The chain runs to 201 residues: Cell division protein SepF (201 aa).

The span at 27–38 (VQERTSVQRDSR) shows a compositional bias: basic and acidic residues. Residues 27–99 (VQERTSVQRD…PRVQNKDSVR (73 aa)) form a disordered region. Residues 43–54 (QEASQRSHMTNS) are compositionally biased toward polar residues. Positions 72-81 (NRQERQRVQR) are enriched in basic and acidic residues. Over residues 83-92 (NAYQQATPRV) the composition is skewed to polar residues.

Belongs to the SepF family. Homodimer. Interacts with FtsZ.

Its subcellular location is the cytoplasm. In terms of biological role, cell division protein that is part of the divisome complex and is recruited early to the Z-ring. Probably stimulates Z-ring formation, perhaps through the cross-linking of FtsZ protofilaments. Its function overlaps with FtsA. The polypeptide is Cell division protein SepF (Streptococcus agalactiae serotype Ia (strain ATCC 27591 / A909 / CDC SS700)).